Here is a 374-residue protein sequence, read N- to C-terminus: uncharacterized protein (374 aa).

Positions 1–46 (MVNEEEKDLTAEGDSNNTGVSPDSIKNKTLDFYPKEKTTERKTRSR) are disordered. Over residues 25–46 (IKNKTLDFYPKEKTTERKTRSR) the composition is skewed to basic and acidic residues. Transmembrane regions (helical) follow at residues 70-90 (YAYI…FIAA), 127-147 (WVFY…KIGI), 153-173 (TIVY…IPVI), 199-219 (IWLF…YGLV), 242-262 (ISIA…MLAI), and 312-332 (YFFG…AITI).

To M.genitalium MG432 and MG443.

The protein resides in the cell membrane. This is an uncharacterized protein from Spiroplasma citri.